Here is a 346-residue protein sequence, read N- to C-terminus: Superficial pseudohyphal growth protein 1 (346 aa).

The interval 289–308 is disordered; that stretch reads NFGEDEDNEEDNEDDLPDAA. The segment covering 291 to 305 has biased composition (acidic residues); the sequence is GEDEDNEEDNEDDLP.

It localises to the nucleus. Functionally, probable transcription factor required for superficial pseudohyphal development in response to nitrogen starvation. The polypeptide is Superficial pseudohyphal growth protein 1 (SFG1) (Saccharomyces cerevisiae (strain ATCC 204508 / S288c) (Baker's yeast)).